Reading from the N-terminus, the 294-residue chain is Non-selective voltage-gated ion channel VDAC2 (294 aa).

N-acetylalanine is present on alanine 2. ATP contacts are provided by lysine 23 and lysine 31. N6-acetyllysine; alternate is present on lysine 31. Lysine 31 is subject to N6-succinyllysine; alternate. A Glycyl lysine isopeptide (Lys-Gly) (interchain with G-Cter in ubiquitin); alternate cross-link involves residue lysine 31. Transmembrane regions (beta stranded) follow at residues 37 to 46 (LVKLDVKTKS) and 50 to 58 (VEFSTSGSS). Residue lysine 64 forms a Glycyl lysine isopeptide (Lys-Gly) (interchain with G-Cter in ubiquitin) linkage. Residues 65–75 (VTGTLETKYKW) form a beta stranded membrane-spanning segment. Phosphotyrosine is present on tyrosine 78. 3 beta stranded membrane passes run 80 to 87 (LTFTEKWN), 91 to 100 (TLGTEIAIED), and 106 to 115 (LKLTFDTTFS). Position 118 is a phosphothreonine (threonine 118). Lysine 120 is subject to N6-acetyllysine; alternate. Lysine 120 participates in a covalent cross-link: Glycyl lysine isopeptide (Lys-Gly) (interchain with G-Cter in ubiquitin); alternate. Lysine 121 is covalently cross-linked (Glycyl lysine isopeptide (Lys-Gly) (interchain with G-Cter in ubiquitin)). A run of 4 beta stranded transmembrane segments spans residues 122–131 (SGKIKSSYKR), 134–141 (INLGCDVD), 148–156 (AIHGSAVFG), and 161–169 (LAGYQMTFD). A Glycyl lysine isopeptide (Lys-Gly) (interchain with G-Cter in ubiquitin) cross-link involves residue lysine 172. A run of 6 beta stranded transmembrane segments spans residues 174–186 (KLTR…GYRT), 189–196 (FQLHTNVN), 200–209 (EFGGSIYQKV), 213–222 (LDTSVNLAWT), 229–238 (RFGIAAKYQL), and 242–249 (ASISAKVN). Serine 251 is modified (phosphoserine). NAD(+) contacts are provided by residues 253-255 (LIG) and 271-275 (SALVD). Beta stranded transmembrane passes span 253-262 (LIGVGYTQTL) and 265-274 (GVKLTLSALV). Lysine 277 carries the post-translational modification N6-acetyllysine; alternate. Lysine 277 participates in a covalent cross-link: Glycyl lysine isopeptide (Lys-Gly) (interchain with G-Cter in ubiquitin); alternate. The chain crosses the membrane as a beta stranded span at residues 284–293 (HKLGLALELE).

This sequence belongs to the eukaryotic mitochondrial porin family. In terms of assembly, monomer, homodimer and higher order oligomers; formation of higher order structures is necessary for scramblase activity. Interacts with ARMC12 in a TBC1D21-dependent manner. Interacts with KLC3. Interacts with SPATA33. Interacts with PPP3CC in a SPATA33-dependent manner. In terms of processing, ubiquitinated by PRKN during mitophagy, leading to its degradation and enhancement of mitophagy. Deubiquitinated by USP30.

Its subcellular location is the mitochondrion outer membrane. It localises to the membrane. It catalyses the reaction chloride(in) = chloride(out). The enzyme catalyses K(+)(in) = K(+)(out). It carries out the reaction a 1,2-diacyl-sn-glycero-3-phospho-L-serine(in) = a 1,2-diacyl-sn-glycero-3-phospho-L-serine(out). The catalysed reaction is a 1,2-diacyl-sn-glycero-3-phosphocholine(in) = a 1,2-diacyl-sn-glycero-3-phosphocholine(out). It catalyses the reaction a 1,2-diacyl-sn-glycero-3-phospho-(1D-myo-inositol)(in) = a 1,2-diacyl-sn-glycero-3-phospho-(1D-myo-inositol)(out). Its function is as follows. Non-selective voltage-gated ion channel that mediates the transport of anions and cations through the mitochondrion outer membrane and plasma membrane. The channel adopts an open conformation at zero mV and a closed conformation at both positive and negative potentials. There are two populations of channels; the main that functions in a lower open-state conductance with lower ion selectivity, that switch, in a voltage-dependent manner, from the open to a low-conducting 'closed' state and the other that has a normal ion selectivity in the typical high conductance, 'open' state. Binds various lipids, including the sphingolipid ceramide, the phospholipid phosphatidylcholine, and the sterols cholesterol and oxysterol. Binding of ceramide promotes the mitochondrial outer membrane permeabilization (MOMP) apoptotic pathway. In terms of biological role, catalyzes the scrambling of phospholipids across the outer mitochondrial membrane; the mechanism is unrelated to channel activity and is capable of translocating both anionic and zwitterionic phospholipids. The chain is Non-selective voltage-gated ion channel VDAC2 from Oryctolagus cuniculus (Rabbit).